The chain runs to 148 residues: Small ribosomal subunit protein eS6 (148 aa).

The protein belongs to the eukaryotic ribosomal protein eS6 family.

The polypeptide is Small ribosomal subunit protein eS6 (Pyrobaculum aerophilum (strain ATCC 51768 / DSM 7523 / JCM 9630 / CIP 104966 / NBRC 100827 / IM2)).